A 265-amino-acid chain; its full sequence is Mlc titration factor A (265 aa).

Residues His111, His148, His152, and Glu211 each coordinate Zn(2+).

Belongs to the MtfA family. In terms of assembly, interacts with Mlc. Zn(2+) serves as cofactor.

The protein resides in the cytoplasm. Its function is as follows. Involved in the modulation of the activity of the glucose-phosphotransferase system (glucose-PTS). Interacts with the transcriptional repressor Mlc, preventing its interaction with DNA and leading to the modulation of expression of genes regulated by Mlc, including ptsG, which encodes the PTS system glucose-specific EIICB component. Functionally, shows zinc-dependent metallopeptidase activity. In Klebsiella pneumoniae (strain 342), this protein is Mlc titration factor A.